The primary structure comprises 463 residues: UDP-N-acetylmuramoylalanine--D-glutamate ligase (463 aa).

Position 126–132 (126–132) interacts with ATP; that stretch reads GSNGKST.

Belongs to the MurCDEF family.

It localises to the cytoplasm. The catalysed reaction is UDP-N-acetyl-alpha-D-muramoyl-L-alanine + D-glutamate + ATP = UDP-N-acetyl-alpha-D-muramoyl-L-alanyl-D-glutamate + ADP + phosphate + H(+). The protein operates within cell wall biogenesis; peptidoglycan biosynthesis. Its function is as follows. Cell wall formation. Catalyzes the addition of glutamate to the nucleotide precursor UDP-N-acetylmuramoyl-L-alanine (UMA). This Idiomarina loihiensis (strain ATCC BAA-735 / DSM 15497 / L2-TR) protein is UDP-N-acetylmuramoylalanine--D-glutamate ligase.